We begin with the raw amino-acid sequence, 446 residues long: tRNA modification GTPase MnmE (446 aa).

Residues R24, E81, and K120 each contribute to the (6S)-5-formyl-5,6,7,8-tetrahydrofolate site. The 153-residue stretch at 216-368 (GLHAVLIGPP…LHIRLRELAL (153 aa)) folds into the TrmE-type G domain. Residue N226 participates in K(+) binding. Residues 226 to 231 (NAGKSS), 245 to 251 (TDVAGTT), and 270 to 273 (DTAG) contribute to the GTP site. S230 contacts Mg(2+). K(+)-binding residues include T245, V247, and T250. Residue T251 coordinates Mg(2+). K446 contacts (6S)-5-formyl-5,6,7,8-tetrahydrofolate.

Belongs to the TRAFAC class TrmE-Era-EngA-EngB-Septin-like GTPase superfamily. TrmE GTPase family. Homodimer. Heterotetramer of two MnmE and two MnmG subunits. The cofactor is K(+).

It localises to the cytoplasm. In terms of biological role, exhibits a very high intrinsic GTPase hydrolysis rate. Involved in the addition of a carboxymethylaminomethyl (cmnm) group at the wobble position (U34) of certain tRNAs, forming tRNA-cmnm(5)s(2)U34. The polypeptide is tRNA modification GTPase MnmE (Xanthomonas oryzae pv. oryzae (strain PXO99A)).